Here is a 233-residue protein sequence, read N- to C-terminus: Orotidine 5'-phosphate decarboxylase (233 aa).

Residues D10, K32, 59–68 (DLKFHDIPNT), T119, R180, Q189, G209, and R210 contribute to the substrate site. Catalysis depends on K61, which acts as the Proton donor.

The protein belongs to the OMP decarboxylase family. Type 1 subfamily. As to quaternary structure, homodimer.

It catalyses the reaction orotidine 5'-phosphate + H(+) = UMP + CO2. Its pathway is pyrimidine metabolism; UMP biosynthesis via de novo pathway; UMP from orotate: step 2/2. In terms of biological role, catalyzes the decarboxylation of orotidine 5'-monophosphate (OMP) to uridine 5'-monophosphate (UMP). This is Orotidine 5'-phosphate decarboxylase from Pasteurella multocida (strain Pm70).